The primary structure comprises 1036 residues: Ephrin type-A receptor 6 (1036 aa).

The N-terminal stretch at Met1–Ala22 is a signal peptide. At Trp23–Val550 the chain is on the extracellular side. The Eph LBD domain maps to Gln34–Arg212. Fibronectin type-III domains follow at residues Pro331 to Asp441 and Ala442 to Glu537. N-linked (GlcNAc...) asparagine glycans are attached at residues Asn343, Asn397, and Asn410. A helical transmembrane segment spans residues Ile551 to Ile571. Topologically, residues Thr572 to Val1036 are cytoplasmic. A phosphotyrosine; by autocatalysis mark is found at Tyr606 and Tyr612. Residues Ile631 to Val944 enclose the Protein kinase domain. Residues Ile637–Val645 and Lys663 each bind ATP. The active-site Proton acceptor is the Asp798. Tyr831 and Tyr978 each carry phosphotyrosine; by autocatalysis. The 65-residue stretch at Pro961–His1025 folds into the SAM domain. A PDZ-binding motif is present at residues Phe1034–Val1036.

The protein belongs to the protein kinase superfamily. Tyr protein kinase family. Ephrin receptor subfamily. As to quaternary structure, heterotetramer upon binding of the ligand. The heterotetramer is composed of an ephrin dimer and a receptor dimer. Oligomerization is probably required to induce biological responses. Interacts (via SAM domain) with ANKS1A (via SAM domain). Expressed in brain and testis.

The protein resides in the membrane. The catalysed reaction is L-tyrosyl-[protein] + ATP = O-phospho-L-tyrosyl-[protein] + ADP + H(+). Functionally, receptor tyrosine kinase which binds promiscuously GPI-anchored ephrin-A family ligands residing on adjacent cells, leading to contact-dependent bidirectional signaling into neighboring cells. The signaling pathway downstream of the receptor is referred to as forward signaling while the signaling pathway downstream of the ephrin ligand is referred to as reverse signaling. This chain is Ephrin type-A receptor 6 (EPHA6), found in Homo sapiens (Human).